The primary structure comprises 346 residues: 3-keto-steroid reductase ERG27 (346 aa).

NADP(+)-binding residues include Leu-19, Thr-42, and Lys-48. Residues Ser-182 and Tyr-205 each act as proton donor in the active site. Residues Tyr-205, Lys-209, and Ser-241 each contribute to the NADP(+) site. Lys-209 functions as the Lowers pKa of active site Tyr in the catalytic mechanism. Residues 242–262 form a helical membrane-spanning segment; the sequence is FSFFQYLNVFTYYGMLFLFYL. Asn-272 is a glycosylation site (N-linked (GlcNAc...) asparagine).

The protein belongs to the short-chain dehydrogenases/reductases (SDR) family. ERG27 subfamily. As to quaternary structure, heterotetramer of ERG25, ERG26, ERG27 and ERG28. ERG28 acts as a scaffold to tether ERG27 and other 4,4-demethylation-related enzymes, forming a demethylation enzyme complex, in the endoplasmic reticulum. Interacts with ERG25 and ERG28. Also interacts with ERG7, but only in lipid particles.

Its subcellular location is the endoplasmic reticulum membrane. The protein resides in the lipid droplet. It carries out the reaction 3-dehydro-4alpha-methylzymosterol + NADPH + H(+) = 4alpha-methylzymosterol + NADP(+). The protein operates within steroid biosynthesis; zymosterol biosynthesis; zymosterol from lanosterol: step 5/6. Functionally, 3-keto-steroid reductase; part of the third module of ergosterol biosynthesis pathway that includes the late steps of the pathway. ERG27 is a catalytic component of the C-4 demethylation complex that catalyzes the reduction of the keto group on the C-3. The third module or late pathway involves the ergosterol synthesis itself through consecutive reactions that mainly occur in the endoplasmic reticulum (ER) membrane. Firstly, the squalene synthase ERG9 catalyzes the condensation of 2 farnesyl pyrophosphate moieties to form squalene, which is the precursor of all steroids. Squalene synthase is crucial for balancing the incorporation of farnesyl diphosphate (FPP) into sterol and nonsterol isoprene synthesis. Secondly, the squalene epoxidase ERG1 catalyzes the stereospecific oxidation of squalene to (S)-2,3-epoxysqualene, which is considered to be a rate-limiting enzyme in steroid biosynthesis. Then, the lanosterol synthase ERG7 catalyzes the cyclization of (S)-2,3 oxidosqualene to lanosterol, a reaction that forms the sterol core. In the next steps, lanosterol is transformed to zymosterol through a complex process involving various demethylation, reduction and desaturation reactions. The lanosterol 14-alpha-demethylase ERG11 (also known as CYP51) catalyzes C14-demethylation of lanosterol to produce 4,4'-dimethyl cholesta-8,14,24-triene-3-beta-ol, which is critical for ergosterol biosynthesis. The C-14 reductase ERG24 reduces the C14=C15 double bond of 4,4-dimethyl-cholesta-8,14,24-trienol to produce 4,4-dimethyl-cholesta-8,24-dienol. 4,4-dimethyl-cholesta-8,24-dienol is substrate of the C-4 demethylation complex ERG25-ERG26-ERG27 in which ERG25 catalyzes the three-step monooxygenation required for the demethylation of 4,4-dimethyl and 4alpha-methylsterols, ERG26 catalyzes the oxidative decarboxylation that results in a reduction of the 3-beta-hydroxy group at the C-3 carbon to an oxo group, and ERG27 is responsible for the reduction of the keto group on the C-3. ERG28 has a role as a scaffold to help anchor ERG25, ERG26 and ERG27 to the endoplasmic reticulum and ERG29 regulates the activity of the iron-containing C4-methylsterol oxidase ERG25. Then, the sterol 24-C-methyltransferase ERG6 catalyzes the methyl transfer from S-adenosyl-methionine to the C-24 of zymosterol to form fecosterol. The C-8 sterol isomerase ERG2 catalyzes the reaction which results in unsaturation at C-7 in the B ring of sterols and thus converts fecosterol to episterol. The sterol-C5-desaturase ERG3 then catalyzes the introduction of a C-5 double bond in the B ring to produce 5-dehydroepisterol. The C-22 sterol desaturase ERG5 further converts 5-dehydroepisterol into ergosta-5,7,22,24(28)-tetraen-3beta-ol by forming the C-22(23) double bond in the sterol side chain. Finally, ergosta-5,7,22,24(28)-tetraen-3beta-ol is substrate of the C-24(28) sterol reductase ERG4 to produce ergosterol. In terms of biological role, facilitates the association of ERG7 with lipid particles preventing its digestion in the endoplasmic reticulum and the lipid particles. The polypeptide is 3-keto-steroid reductase ERG27 (Candida albicans (Yeast)).